The chain runs to 691 residues: MGCAESKDGEGEAQNNRPKYRSCTDTCWLAIYIIFWLFLIVIAIFSFVYGNPLRIINGYDSFGNTCGVKYNEKFQGFPLSGMNTLDKPELFYFDVKELKKSLKICVKSCPAKTMTKGSELLEYYSQTGTQLCKYDYNMQQLTTAGNDAKTFNFLGPCPSFPVHESSPVLHRCVPKGTGEKVQNYYDMLNNWDVAQQFVGDIYSTWHIIAMVCGLALLISIALVTMMHWLSRIVSWIICVLVIVASVALTVALWYAYYNIRNKSGVNTQYSMLEEFVRNQQAVLTLAVLATITMIILIVVIYFLKNKLAGLSALFEEAGQCMMNLPGLLIAPLLAFLVLIAFLSFWVAVIICLATASSPGQSPIAPFDNSKAHQQPLPANALFVSNSTDVNDLRPNARVEYADAGVLRSMFWIYVVGLIWTVEFIFACQQFALAAAVAFWYFQKPTSTPTFYAIGKLVKYHLGTVAKGSFVITIFKIPRLILTYLYAKLKKGEDKGSECAACCLKCCICGFWLLEKFIRFLNHNAYTVVAIESINFCPAAGIAWNAMATNVLQVATINSVGDFILFLGKVVVAALSGLIGIVLLKDKPGLNFYMAPVIIIIIFSFFIAHIILSLFEMVVDTLFLCVCEDKTLNGRSGRWAQSNLAKLVGEEPLQPGEEPPIEVVQMMPINKQPFSITRLPQSDPEVAPMSAD.

A compositionally biased stretch (basic and acidic residues) spans 1–10; sequence MGCAESKDGE. The interval 1-20 is disordered; that stretch reads MGCAESKDGEGEAQNNRPKY. Transmembrane regions (helical) follow at residues 28-48, 205-225, and 232-252; these read WLAI…FSFV, WHII…LVTM, and IVSW…TVAL. N-linked (GlcNAc...) asparagine glycosylation is present at asparagine 261. The next 2 membrane-spanning stretches (helical) occupy residues 282 to 302 and 332 to 352; these read VLTL…VIYF and LLAF…IICL. A glycan (N-linked (GlcNAc...) asparagine) is linked at asparagine 385. 4 helical membrane passes run 408-428, 527-547, 562-582, and 591-611; these read SMFW…FACQ, VVAI…NAMA, FILF…GIVL, and FYMA…HIIL.

The protein belongs to the CTL (choline transporter-like) family.

It localises to the membrane. This chain is Choline transporter-like 1, found in Drosophila melanogaster (Fruit fly).